A 279-amino-acid polypeptide reads, in one-letter code: Urease accessory protein UreD (279 aa).

The protein belongs to the UreD family. UreD, UreF and UreG form a complex that acts as a GTP-hydrolysis-dependent molecular chaperone, activating the urease apoprotein by helping to assemble the nickel containing metallocenter of UreC. The UreE protein probably delivers the nickel.

The protein resides in the cytoplasm. Its function is as follows. Required for maturation of urease via the functional incorporation of the urease nickel metallocenter. The chain is Urease accessory protein UreD from Brucella suis (strain ATCC 23445 / NCTC 10510).